The chain runs to 718 residues: K(+)-insensitive pyrophosphate-energized proton pump (718 aa).

6 helical membrane-spanning segments follow: residues 6-26 (AVLV…IWAI), 54-76 (LTRQ…WYLL), 81-103 (AIGF…HVSV), 112-132 (AASL…AITG), 133-153 (LLVA…LTVW), and 168-188 (VSLG…GGIF). A substrate-binding site is contributed by K190. Mg(2+) contacts are provided by D193, D197, N220, and D223. The next 6 membrane-spanning stretches (helical) occupy residues 240–260 (AVTV…SDIL), 265–285 (LYPL…TFFV), 300–320 (GLIA…TLTV), 335–355 (GTNL…IVVI), 385–405 (GLAV…GGII), and 413–433 (LFGT…IVAL). D441 is a Mg(2+) binding site. A run of 4 helical transmembrane segments spans residues 472-492 (AVTK…LFAA), 524-544 (YVVA…GMAM), 593-613 (IIPS…VLLI), and 620-640 (AFAA…FVAI). Positions 650, 682, and 686 each coordinate Ca(2+). K689 is a binding site for substrate. A helical membrane pass occupies residues 695–715 (AVNPAIKITNIVALLLLAVLA).

Belongs to the H(+)-translocating pyrophosphatase (TC 3.A.10) family. K(+)-insensitive subfamily. In terms of assembly, homodimer. Mg(2+) is required as a cofactor.

It localises to the cell inner membrane. It carries out the reaction diphosphate + H2O + H(+)(in) = 2 phosphate + 2 H(+)(out). Its function is as follows. Proton pump that utilizes the energy of pyrophosphate hydrolysis as the driving force for proton movement across the membrane. Generates a proton motive force. In Brucella anthropi (strain ATCC 49188 / DSM 6882 / CCUG 24695 / JCM 21032 / LMG 3331 / NBRC 15819 / NCTC 12168 / Alc 37) (Ochrobactrum anthropi), this protein is K(+)-insensitive pyrophosphate-energized proton pump.